The primary structure comprises 369 residues: Methionine import ATP-binding protein MetN (369 aa).

The region spanning 31–266 (VEMKDVRRMF…PQSPVTQSML (236 aa)) is the ABC transporter domain. 63–70 (GRSGAGKS) contributes to the ATP binding site.

It belongs to the ABC transporter superfamily. Methionine importer (TC 3.A.1.24) family. The complex is composed of two ATP-binding proteins (MetN), two transmembrane proteins (MetI) and a solute-binding protein (MetQ).

It is found in the cell inner membrane. It catalyses the reaction L-methionine(out) + ATP + H2O = L-methionine(in) + ADP + phosphate + H(+). The enzyme catalyses D-methionine(out) + ATP + H2O = D-methionine(in) + ADP + phosphate + H(+). Part of the ABC transporter complex MetNIQ involved in methionine import. Responsible for energy coupling to the transport system. The chain is Methionine import ATP-binding protein MetN from Brucella abortus (strain 2308).